The sequence spans 242 residues: uncharacterized protein (242 aa).

Residues 17-85 (QRVDERIATT…HGSGSVVRDP (69 aa)) enclose the HTH gntR-type domain. Residues 45–64 (ERDLAERLGVNRTSLRQGLA) constitute a DNA-binding region (H-T-H motif).

This is an uncharacterized protein from Mycobacterium tuberculosis (strain ATCC 25618 / H37Rv).